The primary structure comprises 208 residues: Putative ribosomal protein uS2-like (208 aa).

This sequence belongs to the universal ribosomal protein uS2 family.

The protein localises to the plastid. It is found in the chloroplast. This chain is Putative ribosomal protein uS2-like (rps2-2), found in Chlamydomonas reinhardtii (Chlamydomonas smithii).